A 92-amino-acid chain; its full sequence is Small nuclear ribonucleoprotein E (92 aa).

A Sm domain is found at I18–N92.

Belongs to the snRNP Sm proteins family. Core component of the spliceosomal U1, U2, U4 and U5 small nuclear ribonucleoproteins (snRNPs), the building blocks of the spliceosome. Most spliceosomal snRNPs contain a common set of Sm proteins, SNRPB, SNRPD1, SNRPD2, SNRPD3, SNRPE, SNRPF and SNRPG that assemble in a heptameric protein ring on the Sm site of the small nuclear RNA to form the core snRNP. Component of the U1 snRNP. The U1 snRNP is composed of the U1 snRNA and the 7 core Sm proteins SNRPB, SNRPD1, SNRPD2, SNRPD3, SNRPE, SNRPF and SNRPG, and at least three U1 snRNP-specific proteins SNRNP70/U1-70K, SNRPA/U1-A and SNRPC/U1-C. Component of the U4/U6-U5 tri-snRNP complex composed of the U4, U6 and U5 snRNAs and at least PRPF3, PRPF4, PRPF6, PRPF8, PRPF31, SNRNP200, TXNL4A, SNRNP40, SNRPB, SNRPD1, SNRPD2, SNRPD3, SNRPE, SNRPF, SNRPG, DDX23, CD2BP2, PPIH, SNU13, EFTUD2, SART1 and USP39, plus LSM2, LSM3, LSM4, LSM5, LSM6, LSM7 and LSM8. Component of the U7 snRNP complex, or U7 Sm protein core complex, that is composed of the U7 snRNA and at least LSM10, LSM11, SNRPB, SNRPD3, SNRPE, SNRPF and SNRPG; the complex does not contain SNRPD1 and SNRPD2. Component of the minor spliceosome, which splices U12-type introns. Part of the SMN-Sm complex that contains SMN1, GEMIN2/SIP1, DDX20/GEMIN3, GEMIN4, GEMIN5, GEMIN6, GEMIN7, GEMIN8, STRAP/UNRIP and the Sm proteins SNRPB, SNRPD1, SNRPD2, SNRPD3, SNRPE, SNRPF and SNRPG; catalyzes core snRNPs assembly. Forms a 6S pICln-Sm complex composed of CLNS1A/pICln, SNRPD1, SNRPD2, SNRPE, SNRPF and SNRPG; ring-like structure where CLNS1A/pICln mimics additional Sm proteins and which is unable to assemble into the core snRNP. Interacts with SMN1; the interaction is direct. Interacts with GEMIN2 (via N-terminus); the interaction is direct. Interacts with SNRPF; the interaction is direct. Interacts with SNRPG; the interaction is direct.

The protein localises to the cytoplasm. The protein resides in the cytosol. Its subcellular location is the nucleus. Plays a role in pre-mRNA splicing as a core component of the spliceosomal U1, U2, U4 and U5 small nuclear ribonucleoproteins (snRNPs), the building blocks of the spliceosome. Component of both the pre-catalytic spliceosome B complex and activated spliceosome C complexes. As a component of the minor spliceosome, involved in the splicing of U12-type introns in pre-mRNAs. As part of the U7 snRNP it is involved in histone 3'-end processing. This Sus scrofa (Pig) protein is Small nuclear ribonucleoprotein E (SNRPE).